Consider the following 129-residue polypeptide: Large ribosomal subunit protein bL12 (129 aa).

Belongs to the bacterial ribosomal protein bL12 family. As to quaternary structure, homodimer. Part of the ribosomal stalk of the 50S ribosomal subunit. Forms a multimeric L10(L12)X complex, where L10 forms an elongated spine to which 2 to 4 L12 dimers bind in a sequential fashion. Binds GTP-bound translation factors.

Its function is as follows. Forms part of the ribosomal stalk which helps the ribosome interact with GTP-bound translation factors. Is thus essential for accurate translation. This is Large ribosomal subunit protein bL12 from Photobacterium profundum (strain SS9).